The following is a 297-amino-acid chain: HTH-type transcriptional regulator ArgP (297 aa).

The 57-residue stretch at 4–60 (PDYRTLQALDAVIRERGFERAAQKLCITQSAVSQRIKQLENMFGQPLLVRTVPPRPT) folds into the HTH lysR-type domain. The H-T-H motif DNA-binding region spans 21-40 (FERAAQKLCITQSAVSQRIK).

The protein belongs to the LysR transcriptional regulatory family. In terms of assembly, homodimer.

Its function is as follows. Controls the transcription of genes involved in arginine and lysine metabolism. The protein is HTH-type transcriptional regulator ArgP of Escherichia coli O127:H6 (strain E2348/69 / EPEC).